The following is a 359-amino-acid chain: 3-dehydroquinate synthase (359 aa).

NAD(+) is bound by residues Asp70 to Lys75, Gly105 to Asp109, Thr129 to Thr130, Lys142, Lys151, and Phe169 to Thr172. Glu184, His247, and His264 together coordinate Zn(2+).

Belongs to the sugar phosphate cyclases superfamily. Dehydroquinate synthase family. Co(2+) serves as cofactor. Zn(2+) is required as a cofactor. It depends on NAD(+) as a cofactor.

It localises to the cytoplasm. It carries out the reaction 7-phospho-2-dehydro-3-deoxy-D-arabino-heptonate = 3-dehydroquinate + phosphate. Its pathway is metabolic intermediate biosynthesis; chorismate biosynthesis; chorismate from D-erythrose 4-phosphate and phosphoenolpyruvate: step 2/7. Its function is as follows. Catalyzes the conversion of 3-deoxy-D-arabino-heptulosonate 7-phosphate (DAHP) to dehydroquinate (DHQ). In Francisella tularensis subsp. tularensis (strain FSC 198), this protein is 3-dehydroquinate synthase.